A 612-amino-acid chain; its full sequence is UvrABC system protein C (612 aa).

The GIY-YIG domain occupies A13–T92. The UVR domain maps to K204 to V239.

The protein belongs to the UvrC family. As to quaternary structure, interacts with UvrB in an incision complex.

The protein localises to the cytoplasm. Functionally, the UvrABC repair system catalyzes the recognition and processing of DNA lesions. UvrC both incises the 5' and 3' sides of the lesion. The N-terminal half is responsible for the 3' incision and the C-terminal half is responsible for the 5' incision. This Lachnospira eligens (strain ATCC 27750 / DSM 3376 / VPI C15-48 / C15-B4) (Eubacterium eligens) protein is UvrABC system protein C.